We begin with the raw amino-acid sequence, 128 residues long: Protein SOB FIVE-LIKE 3 (128 aa).

2 disordered regions span residues 1-26 (MERE…EEEE) and 54-128 (KDSD…HKKK). Residues 8–18 (SSESGWTTYIS) are compositionally biased toward polar residues. The SOFL-A motif lies at 11–16 (SGWTTY). Residues 59-68 (SMASDASSGP) carry the SOFL-B motif. Residues 80 to 104 (REGLALRNGKGESNDVYSHRIDDKN) are compositionally biased toward basic and acidic residues. The short motif at 111–118 (RKKEKKKS) is the Nuclear localization signal element.

It belongs to the SOFL plant protein family. Expressed in seedlings, roots, flowers and siliques.

The protein localises to the cytoplasm. The protein resides in the nucleus. Functionally, involved in cytokinin-mediated development. In Arabidopsis thaliana (Mouse-ear cress), this protein is Protein SOB FIVE-LIKE 3.